Reading from the N-terminus, the 98-residue chain is Ig heavy chain V region 6.96 (98 aa).

The 98-residue stretch at 1–98 (EVQLVESGGG…EDTAMYYCAR (98 aa)) folds into the Ig-like domain.

The polypeptide is Ig heavy chain V region 6.96 (Mus musculus (Mouse)).